The sequence spans 312 residues: Dihydroorotate dehydrogenase B (NAD(+)), catalytic subunit (312 aa).

FMN-binding positions include Ser23 and 47–48 (KA). Substrate-binding positions include Lys47 and 71-75 (NAIGL). FMN-binding residues include Asn102 and Asn130. Substrate is bound at residue Asn130. Cys133 functions as the Nucleophile in the catalytic mechanism. Residues Lys168 and Ile194 each contribute to the FMN site. A substrate-binding site is contributed by 195–196 (NT). Residues Gly220, 246–247 (GG), and 268–269 (GT) each bind FMN.

The protein belongs to the dihydroorotate dehydrogenase family. Type 1 subfamily. In terms of assembly, heterotetramer of 2 PyrK and 2 PyrD type B subunits. FMN is required as a cofactor.

It localises to the cytoplasm. The enzyme catalyses (S)-dihydroorotate + NAD(+) = orotate + NADH + H(+). It functions in the pathway pyrimidine metabolism; UMP biosynthesis via de novo pathway; orotate from (S)-dihydroorotate (NAD(+) route): step 1/1. Its function is as follows. Catalyzes the conversion of dihydroorotate to orotate with NAD(+) as electron acceptor. The chain is Dihydroorotate dehydrogenase B (NAD(+)), catalytic subunit (pyrDB) from Enterococcus faecalis (strain ATCC 700802 / V583).